The chain runs to 243 residues: MSKTHFGFESVEENEKAKKVAGVFHSVASNYDLMNDLMSAGMHRAWKAFTIAQANVRPGFKVLDIAAGTGDLTKSFAKAAGPTGEVWHTDINESMLRVGRDRLLDKGVVTPSLLCDAEKIPFPDNYFDVVTVAFGLRNMTHKDAALAEMRRVTKPGGRVMVLEFSKVWDPLKKAYDLYSFKVLPWLGDKFAKDAESYRYLAESIRMHPDQDTLKTMMEQAGLDAVKYYNLSGGVVALHLGTKY.

Residues Thr69, Asp90, and 116 to 117 (DA) contribute to the S-adenosyl-L-methionine site.

It belongs to the class I-like SAM-binding methyltransferase superfamily. MenG/UbiE family.

The enzyme catalyses a 2-demethylmenaquinol + S-adenosyl-L-methionine = a menaquinol + S-adenosyl-L-homocysteine + H(+). It carries out the reaction a 2-methoxy-6-(all-trans-polyprenyl)benzene-1,4-diol + S-adenosyl-L-methionine = a 5-methoxy-2-methyl-3-(all-trans-polyprenyl)benzene-1,4-diol + S-adenosyl-L-homocysteine + H(+). It functions in the pathway quinol/quinone metabolism; menaquinone biosynthesis; menaquinol from 1,4-dihydroxy-2-naphthoate: step 2/2. It participates in cofactor biosynthesis; ubiquinone biosynthesis. Its function is as follows. Methyltransferase required for the conversion of demethylmenaquinol (DMKH2) to menaquinol (MKH2) and the conversion of 2-polyprenyl-6-methoxy-1,4-benzoquinol (DDMQH2) to 2-polyprenyl-3-methyl-6-methoxy-1,4-benzoquinol (DMQH2). This is Ubiquinone/menaquinone biosynthesis C-methyltransferase UbiE from Burkholderia cenocepacia (strain ATCC BAA-245 / DSM 16553 / LMG 16656 / NCTC 13227 / J2315 / CF5610) (Burkholderia cepacia (strain J2315)).